A 299-amino-acid polypeptide reads, in one-letter code: 4-diphosphocytidyl-2-C-methyl-D-erythritol kinase (299 aa).

Lys20 is an active-site residue. An ATP-binding site is contributed by 106–116; sequence PMGGGLGGGSS. Residue Asp148 is part of the active site.

The protein belongs to the GHMP kinase family. IspE subfamily. Homodimer.

It carries out the reaction 4-CDP-2-C-methyl-D-erythritol + ATP = 4-CDP-2-C-methyl-D-erythritol 2-phosphate + ADP + H(+). Its pathway is isoprenoid biosynthesis; isopentenyl diphosphate biosynthesis via DXP pathway; isopentenyl diphosphate from 1-deoxy-D-xylulose 5-phosphate: step 3/6. Its function is as follows. Catalyzes the phosphorylation of the position 2 hydroxy group of 4-diphosphocytidyl-2C-methyl-D-erythritol. The polypeptide is 4-diphosphocytidyl-2-C-methyl-D-erythritol kinase (Yersinia pseudotuberculosis serotype O:1b (strain IP 31758)).